Here is a 498-residue protein sequence, read N- to C-terminus: Protein WHAT'S THIS FACTOR 1, chloroplastic (498 aa).

The N-terminal 50 residues, 1–50 (MDAKLLLPFPFAPAAATRSPKSLFLGAPLPPPPRPPPFPLRLRPRPAAVV), are a transit peptide targeting the chloroplast. Positions 59-387 (KEAPFDTVIQ…LKEKMRALVA (329 aa)) constitute a PORR domain. Disordered stretches follow at residues 397 to 427 (VGTG…EDEG) and 446 to 498 (DYEW…RERW). 2 stretches are compositionally biased toward acidic residues: residues 417–427 (SDEEYDDEDEG) and 456–466 (ENDDSPPDFGD).

The protein resides in the plastid. The protein localises to the chloroplast. In terms of biological role, RNA-binding protein involved in the chloroplastic group II intron splicing. Binds specific group II introns and promotes their splicing. Functions in the context of a heterodimer with the ribonuclease III domain-containing protein RNC1. The sequence is that of Protein WHAT'S THIS FACTOR 1, chloroplastic from Zea mays (Maize).